Consider the following 396-residue polypeptide: MKKLVILGSTGSIGKSTLSVVEQNKTEYEVFGLVGGKNVELMAAQCLLFQPKFAALDDENAAKALEEQLRQLNVKTEVLSGQKAICELSAHPEVDMVMAAIVGAAGLLPTLSAVKAGKKVLLANKESLVTCGQIFIDEARKSGAQLLPVDSEHNAIFQSLPPEAQQKVGFCPLAELGVSKIILTGSGGPFRVKPLDEFAAITPAQAVAHPNWSMGKKISVDSATMMNKGLEYIEARWLFNASAEEMEIIIHPQSIIHSMVRYIDGSVIAQMGNPDMCTPIAHTMAYPKRINAGVAPLDFFKLKELTFIEPDFARYPNLKLAIDAFAEGQYATTAMNAANEVAVEAFLNERIRFIDIVNVNRTVVENIAPVQVKEIADVLHIDKLARELAEQAVINL.

Residues T10, G11, S12, I13, G36, K37, N38, and N124 each contribute to the NADPH site. K125 lines the 1-deoxy-D-xylulose 5-phosphate pocket. E126 is a binding site for NADPH. Residue D150 coordinates Mn(2+). Residues S151, E152, S186, and H209 each coordinate 1-deoxy-D-xylulose 5-phosphate. Residue E152 coordinates Mn(2+). G215 is a binding site for NADPH. S222, N227, K228, and E231 together coordinate 1-deoxy-D-xylulose 5-phosphate. E231 contacts Mn(2+).

It belongs to the DXR family. The cofactor is Mg(2+). Requires Mn(2+) as cofactor.

The catalysed reaction is 2-C-methyl-D-erythritol 4-phosphate + NADP(+) = 1-deoxy-D-xylulose 5-phosphate + NADPH + H(+). It functions in the pathway isoprenoid biosynthesis; isopentenyl diphosphate biosynthesis via DXP pathway; isopentenyl diphosphate from 1-deoxy-D-xylulose 5-phosphate: step 1/6. Functionally, catalyzes the NADPH-dependent rearrangement and reduction of 1-deoxy-D-xylulose-5-phosphate (DXP) to 2-C-methyl-D-erythritol 4-phosphate (MEP). The protein is 1-deoxy-D-xylulose 5-phosphate reductoisomerase of Actinobacillus pleuropneumoniae serotype 3 (strain JL03).